The sequence spans 483 residues: E3 ubiquitin-protein ligase TRIM50 (483 aa).

The RING-type zinc finger occupies 16 to 57; that stretch reads CPICLEVFKEPLMLQCGHSYCKNCLDSLSEHLDSELRCPVCR. A B box-type zinc finger spans residues 84–125; that stretch reads TEPTVCVHHRNPLSLFCEKDQEFICGLCGLLGSHQHHRVTPV. Zn(2+) contacts are provided by Cys89, His92, Cys111, and His117. Coiled-coil stretches lie at residues 127 to 169 and 203 to 236; these read TVYS…NESD and GLVA…GNES. A B30.2/SPRY domain is found at 275–474; sequence DIKLTVWKRL…LPMVLPPPSA (200 aa). The residue at position 372 (Lys372) is an N6-acetyllysine.

Belongs to the TRIM/RBCC family. As to quaternary structure, can form dimers and trimers. Interacts with several E2 ubiquitin-conjugating enzymes, including UBE2L6, UBE2E1, UBE2E3. No interaction with UBE2H. Interacts with BECN1. Interacts with SQSTM1. Interacts with NLRP3. Post-translationally, auto-ubiquitinated. In terms of processing, acetylated by EP300 and KAT2B. HDAC6 drives TRIM50 deacetylation. Acetylation antagonizes with TRIM50 ubiquitination.

It is found in the cytoplasm. It carries out the reaction S-ubiquitinyl-[E2 ubiquitin-conjugating enzyme]-L-cysteine + [acceptor protein]-L-lysine = [E2 ubiquitin-conjugating enzyme]-L-cysteine + N(6)-ubiquitinyl-[acceptor protein]-L-lysine.. Functionally, E3 ubiquitin-protein ligase that ubiquitinates Beclin-1/BECN1 in a 'Lys-63'-dependent manner enhancing its binding to ULK1. In turn, promotes starvation-induced autophagy activation. Also interacts with p62/SQSTM1 protein and thereby induces the formation and the autophagy clearance of aggresome-associated polyubiquitinated proteins through HDAC6 interaction. Also promotes NLRP3 inflammasome activation by directly inducing NLRP3 oligomerization independent of its E3 ligase function. The chain is E3 ubiquitin-protein ligase TRIM50 (Trim50) from Rattus norvegicus (Rat).